We begin with the raw amino-acid sequence, 66 residues long: Large ribosomal subunit protein uL29 (66 aa).

It belongs to the universal ribosomal protein uL29 family.

In Methylibium petroleiphilum (strain ATCC BAA-1232 / LMG 22953 / PM1), this protein is Large ribosomal subunit protein uL29.